Here is a 499-residue protein sequence, read N- to C-terminus: Ribose import ATP-binding protein RbsA (499 aa).

ABC transporter domains are found at residues 3-240 and 250-494; these read VEMS…VGRE and LEPG…TGGD. Residue 35–42 coordinates ATP; sequence GENGAGKS.

It belongs to the ABC transporter superfamily. Ribose importer (TC 3.A.1.2.1) family. In terms of assembly, the complex is composed of an ATP-binding protein (RbsA), two transmembrane proteins (RbsC) and a solute-binding protein (RbsB).

Its subcellular location is the cell membrane. The enzyme catalyses D-ribose(out) + ATP + H2O = D-ribose(in) + ADP + phosphate + H(+). In terms of biological role, part of the ABC transporter complex RbsABC involved in ribose import. Responsible for energy coupling to the transport system. In Shouchella clausii (strain KSM-K16) (Alkalihalobacillus clausii), this protein is Ribose import ATP-binding protein RbsA.